The following is a 206-amino-acid chain: Small ribosomal subunit protein uS4 (206 aa).

Residues 98–158 (RRLDNVVFRL…EKSRSMELIK (61 aa)) form the S4 RNA-binding domain.

The protein belongs to the universal ribosomal protein uS4 family. Part of the 30S ribosomal subunit. Contacts protein S5. The interaction surface between S4 and S5 is involved in control of translational fidelity.

Its function is as follows. One of the primary rRNA binding proteins, it binds directly to 16S rRNA where it nucleates assembly of the body of the 30S subunit. With S5 and S12 plays an important role in translational accuracy. The sequence is that of Small ribosomal subunit protein uS4 from Thermoanaerobacter pseudethanolicus (strain ATCC 33223 / 39E) (Clostridium thermohydrosulfuricum).